Reading from the N-terminus, the 341-residue chain is Ribosomal RNA small subunit methyltransferase C (341 aa).

The protein belongs to the methyltransferase superfamily. RsmC family. In terms of assembly, monomer.

Its subcellular location is the cytoplasm. The catalysed reaction is guanosine(1207) in 16S rRNA + S-adenosyl-L-methionine = N(2)-methylguanosine(1207) in 16S rRNA + S-adenosyl-L-homocysteine + H(+). Its function is as follows. Specifically methylates the guanine in position 1207 of 16S rRNA in the 30S particle. The protein is Ribosomal RNA small subunit methyltransferase C of Shewanella halifaxensis (strain HAW-EB4).